The following is a 316-amino-acid chain: Ribosomal RNA small subunit methyltransferase H (316 aa).

S-adenosyl-L-methionine is bound by residues 36 to 38, Asp-56, Phe-83, Asp-104, and Gln-111; that span reads GGH.

Belongs to the methyltransferase superfamily. RsmH family.

It localises to the cytoplasm. The catalysed reaction is cytidine(1402) in 16S rRNA + S-adenosyl-L-methionine = N(4)-methylcytidine(1402) in 16S rRNA + S-adenosyl-L-homocysteine + H(+). Functionally, specifically methylates the N4 position of cytidine in position 1402 (C1402) of 16S rRNA. In Protochlamydia amoebophila (strain UWE25), this protein is Ribosomal RNA small subunit methyltransferase H.